The chain runs to 398 residues: Succinate--CoA ligase [ADP-forming] subunit beta (398 aa).

The 246-residue stretch at 9 to 254 (KRLLHEYGAP…LSEEDPKEIE (246 aa)) folds into the ATP-grasp domain. Residues Lys46, 53–55 (GRG), Glu109, Ala112, and Glu117 each bind ATP. The Mg(2+) site is built by Asn209 and Asp223. Substrate-binding positions include Asn274 and 331–333 (GIM).

Belongs to the succinate/malate CoA ligase beta subunit family. As to quaternary structure, heterotetramer of two alpha and two beta subunits. It depends on Mg(2+) as a cofactor.

It carries out the reaction succinate + ATP + CoA = succinyl-CoA + ADP + phosphate. The enzyme catalyses GTP + succinate + CoA = succinyl-CoA + GDP + phosphate. It functions in the pathway carbohydrate metabolism; tricarboxylic acid cycle; succinate from succinyl-CoA (ligase route): step 1/1. Functionally, succinyl-CoA synthetase functions in the citric acid cycle (TCA), coupling the hydrolysis of succinyl-CoA to the synthesis of either ATP or GTP and thus represents the only step of substrate-level phosphorylation in the TCA. The beta subunit provides nucleotide specificity of the enzyme and binds the substrate succinate, while the binding sites for coenzyme A and phosphate are found in the alpha subunit. The sequence is that of Succinate--CoA ligase [ADP-forming] subunit beta from Bartonella tribocorum (strain CIP 105476 / IBS 506).